The following is a 507-amino-acid chain: LRDEEQTAESIKNQMTVKEWEKVFEMSQDQNLYHNLCTSLFPTIHGNDEVKRGVLLMLFGGVPKTTGEGTSLRGDINVCIVGDPSTAKSQFLKHVDEFSPRAVYTSGKASSASGLTAAVVRDEESHEFVIEAGALMLADNGVCCIDEFDKMDMRDQVAIHEAMEQQTISITKAGVKATLNARTSILAAANPVSGHYDRSKSLKQNINLSAPIMSRFDLFFILVDECNEVTDYAIARRIVDLHSRIEESIDRVYSLDDIRRYLLFARQFKPKISKESEDFIVEQYKRLRQRDGSGITKSSWRITVRQLESMIRLSESMARMHCCDEVQPKHVKEAFRLLNKSIIRVETPDVNLDQEEEIQMETDEGPGGINGHADSPAPVNGFNGSGEDASQETVPKPSLRLAFAEYCRISNLIVLHLRKMEEEEDESALKRSELVNWYLKEIESEIDSEEELINKKRIIEKVVHRLTHYDHVLIELTQAGLKGSSEGSESYEEDPYLVVNPNYLLED.

The MCM domain occupies Leu32–Val239. ATP-binding residues include His45, Ser85, Thr86, Ala87, Lys88, Ser89, and Asn190. Residues Ser214–Asp217 carry the Arginine finger motif. ADP contacts are provided by Arg305 and Glu308. Lys329 carries the N6-acetyllysine modification. A disordered region spans residues Gly365–Glu392. A phosphoserine mark is found at Ser375, Ser390, and Ser448. Thr477 carries the post-translational modification Phosphothreonine.

The protein belongs to the MCM family. In terms of assembly, component of the MCM2-7 complex. The complex forms a toroidal hexameric ring with the proposed subunit order MCM2-MCM6-MCM4-MCM7-MCM3-MCM5. Component of the CMG helicase complex, a hexameric ring of related MCM2-7 subunits stabilized by CDC45 and the tetrameric GINS complex. May interact with MCM10. Interacts with TIPIN. Interacts with CDT1. Interacts with MCMBP. Interacts with DDI2. O-glycosylated (O-GlcNAcylated), in a cell cycle-dependent manner.

The protein localises to the nucleus. Its subcellular location is the chromosome. The enzyme catalyses ATP + H2O = ADP + phosphate + H(+). Acts as a component of the MCM2-7 complex (MCM complex) which is the replicative helicase essential for 'once per cell cycle' DNA replication initiation and elongation in eukaryotic cells. Core component of CDC45-MCM-GINS (CMG) helicase, the molecular machine that unwinds template DNA during replication, and around which the replisome is built. The active ATPase sites in the MCM2-7 ring are formed through the interaction surfaces of two neighboring subunits such that a critical structure of a conserved arginine finger motif is provided in trans relative to the ATP-binding site of the Walker A box of the adjacent subunit. The six ATPase active sites, however, are likely to contribute differentially to the complex helicase activity. The protein is DNA replication licensing factor MCM6 (Mcm6) of Rattus norvegicus (Rat).